A 408-amino-acid chain; its full sequence is Aminoacylase-1A (408 aa).

Position 80 (histidine 80) interacts with Zn(2+). Aspartate 82 is a catalytic residue. Zn(2+) is bound at residue aspartate 113. Glutamate 147 functions as the Proton acceptor in the catalytic mechanism. Residues glutamate 148, glutamate 175, and histidine 373 each coordinate Zn(2+). Serine 408 is modified (phosphoserine).

Belongs to the peptidase M20A family. Homodimer. Zn(2+) serves as cofactor. In terms of processing, the N-terminus is blocked.

It localises to the cytoplasm. The catalysed reaction is an N-acyl-L-amino acid + H2O = an L-alpha-amino acid + a carboxylate. It carries out the reaction an N-acetyl-L-cysteine-S-conjugate + H2O = an S-substituted L-cysteine + acetate. Functionally, involved in the hydrolysis of N-acylated or N-acetylated amino acids (except L-aspartate). This is Aminoacylase-1A (Acy1a) from Rattus norvegicus (Rat).